Reading from the N-terminus, the 104-residue chain is Thioredoxin-3 (104 aa).

A Thioredoxin domain is found at 2 to 104 (SKVIHVTSNE…TLRSTLEANI (103 aa)). Residues Cys-31 and Cys-34 each act as nucleophile in the active site. Cys-31 and Cys-34 are joined by a disulfide.

The protein belongs to the thioredoxin family.

Participates in various redox reactions through the reversible oxidation of its active center dithiol to a disulfide and catalyzes dithiol-disulfide exchange reactions. The protein is Thioredoxin-3 (trxC) of Dictyostelium discoideum (Social amoeba).